The following is a 223-amino-acid chain: ATP phosphoribosyltransferase (223 aa).

This sequence belongs to the ATP phosphoribosyltransferase family. Short subfamily. As to quaternary structure, heteromultimer composed of HisG and HisZ subunits.

The protein localises to the cytoplasm. The catalysed reaction is 1-(5-phospho-beta-D-ribosyl)-ATP + diphosphate = 5-phospho-alpha-D-ribose 1-diphosphate + ATP. The protein operates within amino-acid biosynthesis; L-histidine biosynthesis; L-histidine from 5-phospho-alpha-D-ribose 1-diphosphate: step 1/9. Its function is as follows. Catalyzes the condensation of ATP and 5-phosphoribose 1-diphosphate to form N'-(5'-phosphoribosyl)-ATP (PR-ATP). Has a crucial role in the pathway because the rate of histidine biosynthesis seems to be controlled primarily by regulation of HisG enzymatic activity. This Sphingopyxis alaskensis (strain DSM 13593 / LMG 18877 / RB2256) (Sphingomonas alaskensis) protein is ATP phosphoribosyltransferase.